The chain runs to 264 residues: 3-methyl-2-oxobutanoate hydroxymethyltransferase (264 aa).

Mg(2+) contacts are provided by Asp-45 and Asp-84. Residues 45-46 (DS), Asp-84, and Lys-112 each bind 3-methyl-2-oxobutanoate. Residue Glu-114 coordinates Mg(2+). Glu-181 (proton acceptor) is an active-site residue.

The protein belongs to the PanB family. As to quaternary structure, homodecamer; pentamer of dimers. The cofactor is Mg(2+).

It localises to the cytoplasm. The enzyme catalyses 3-methyl-2-oxobutanoate + (6R)-5,10-methylene-5,6,7,8-tetrahydrofolate + H2O = 2-dehydropantoate + (6S)-5,6,7,8-tetrahydrofolate. It participates in cofactor biosynthesis; (R)-pantothenate biosynthesis; (R)-pantoate from 3-methyl-2-oxobutanoate: step 1/2. In terms of biological role, catalyzes the reversible reaction in which hydroxymethyl group from 5,10-methylenetetrahydrofolate is transferred onto alpha-ketoisovalerate to form ketopantoate. The protein is 3-methyl-2-oxobutanoate hydroxymethyltransferase of Shewanella halifaxensis (strain HAW-EB4).